The chain runs to 62 residues: Photosystem II reaction center protein Z (62 aa).

Helical transmembrane passes span 8–28 (ALLL…VLYA) and 41–61 (LVGG…NYFV).

This sequence belongs to the PsbZ family. As to quaternary structure, PSII is composed of 1 copy each of membrane proteins PsbA, PsbB, PsbC, PsbD, PsbE, PsbF, PsbH, PsbI, PsbJ, PsbK, PsbL, PsbM, PsbT, PsbX, PsbY, PsbZ, Psb30/Ycf12, peripheral proteins PsbO, CyanoQ (PsbQ), PsbU, PsbV and a large number of cofactors. It forms dimeric complexes.

It localises to the cellular thylakoid membrane. May control the interaction of photosystem II (PSII) cores with the light-harvesting antenna, regulates electron flow through the 2 photosystem reaction centers. PSII is a light-driven water plastoquinone oxidoreductase, using light energy to abstract electrons from H(2)O, generating a proton gradient subsequently used for ATP formation. The chain is Photosystem II reaction center protein Z from Synechococcus elongatus (strain ATCC 33912 / PCC 7942 / FACHB-805) (Anacystis nidulans R2).